A 474-amino-acid polypeptide reads, in one-letter code: H/ACA ribonucleoprotein complex subunit cbf5 (474 aa).

Asp100 functions as the Nucleophile in the catalytic mechanism. The PUA domain occupies 271–346 (YKRIVVKDSA…VVAKVKRCIM (76 aa)). Disordered stretches follow at residues 361–391 (SMKK…SKSY) and 406–474 (PVVA…KKSE). Residues 368–378 (KKEGKLDKYGR) show a composition bias toward basic and acidic residues. Over residues 406-419 (PVVAPAAPTVEAEV) the composition is skewed to low complexity. Over residues 423 to 434 (EDSKKRKSVESS) the composition is skewed to basic and acidic residues. The segment at 434–468 (SEKDEDEAAKKEEKRRKKEAKKEKKEKKEKKEKKE) is 7 X 3 AA approximate tandem repeats of K-K-E. A run of 7 repeats spans residues 443–445 (KKE), 450–452 (KKE), 454–456 (KKE), 457–459 (KKE), 460–462 (KKE), 463–465 (KKE), and 466–468 (KKE). The segment covering 446 to 474 (EKRRKKEAKKEKKEKKEKKEKKEKKKKSE) has biased composition (basic residues).

This sequence belongs to the pseudouridine synthase TruB family. As to quaternary structure, component of the small nucleolar ribonucleoprotein particles containing H/ACA-type snoRNAs (H/ACA snoRNPs).

Its subcellular location is the nucleus. The protein resides in the nucleolus. It carries out the reaction uridine in 5S rRNA = pseudouridine in 5S rRNA. The enzyme catalyses uridine in snRNA = pseudouridine in snRNA. The catalysed reaction is a uridine in mRNA = a pseudouridine in mRNA. Its function is as follows. Catalytic subunit of H/ACA small nucleolar ribonucleoprotein (H/ACA snoRNP) complex, which catalyzes pseudouridylation of rRNA. This involves the isomerization of uridine such that the ribose is subsequently attached to C5, instead of the normal N1. Pseudouridine ('psi') residues may serve to stabilize the conformation of rRNAs and play a central role in ribosomal RNA processing. The H/ACA snoRNP complex also mediates pseudouridylation of other types of RNAs. Catalyzes pseudouridylation at position 93 in U2 snRNA. Also catalyzes pseudouridylation of mRNAs; H/ACA-type snoRNAs probably guide pseudouridylation of mRNAs. This chain is H/ACA ribonucleoprotein complex subunit cbf5 (cbf5), found in Schizosaccharomyces pombe (strain 972 / ATCC 24843) (Fission yeast).